The chain runs to 363 residues: D-proline dehydrogenase (363 aa).

Residue 3–17 (VAIVGGGIIGLFTAY) coordinates FAD.

Belongs to the DadA oxidoreductase family. Homotetramer. It depends on FAD as a cofactor.

The protein localises to the cell membrane. The catalysed reaction is D-proline + A = 1-pyrroline-2-carboxylate + AH2. Its function is as follows. Catalyzes the dehydrogenation of D-proline. Can also use other D-amino acids, but with lower efficiency. This chain is D-proline dehydrogenase (dpdh), found in Pyrobaculum islandicum (strain DSM 4184 / JCM 9189 / GEO3).